Reading from the N-terminus, the 116-residue chain is Phycoerythrin alpha-3 subunit (116 aa).

(2R,3E)-phycoerythrobilin-binding residues include serine 53, glutamate 63, arginine 64, cysteine 67, and lysine 85.

Belongs to the phycoerythrin family. Heterotetramer of 2 different alpha chains and 2 identical beta chains which form 2 alpha-beta heterodimers within the heterotetramer. The two alpha-beta heterodimers are rotated to an open configuration in contrast to the closed configuration found in other cryptophyte species due to the insertion of a single amino acid, Asp-65, in a conserved region of the alpha chain. In the open form, the central chromophores are not in physical contact but are separated by a water-filled channel. Post-translationally, contains three phycoerythrobilin chromophores with binding mediated by both the alpha and beta subunits.

The protein localises to the plastid. It localises to the chloroplast thylakoid membrane. Functionally, light-harvesting photosynthetic tetrapyrrole chromophore-protein from the phycobiliprotein complex. In Hemiselmis andersenii (Cryptophyte alga), this protein is Phycoerythrin alpha-3 subunit.